The primary structure comprises 273 residues: Anthocyanin regulatory C1 protein (273 aa).

HTH myb-type domains follow at residues 9-65 (KEGV…RPNI) and 66-116 (RRGN…GRRA). 2 consecutive DNA-binding regions (H-T-H motif) follow at residues 37 to 61 (WREV…LNYL) and 89 to 112 (WSLI…NSTL). Disordered regions lie at residues 137–164 (ATPA…SAGT) and 196–220 (AGET…SDDC). The span at 204–214 (AGGGGGGGGEA) shows a compositional bias: gly residues.

It is found in the nucleus. Its function is as follows. Controls the expression of genes involved in anthocyanin biosynthesis. Regulates the expression of at least 3 structural genes: chalcone synthase, dihydroflavonol reductase and flavonol O(3) glucosyltransferase. C1 acts as a trans-acting factor. In Zea mays (Maize), this protein is Anthocyanin regulatory C1 protein (C1).